The chain runs to 60 residues: Small ribosomal subunit protein bS21 (60 aa).

Belongs to the bacterial ribosomal protein bS21 family.

The polypeptide is Small ribosomal subunit protein bS21 (rpsU) (Mycoplasma pneumoniae (strain ATCC 29342 / M129 / Subtype 1) (Mycoplasmoides pneumoniae)).